Here is a 214-residue protein sequence, read N- to C-terminus: Orotate phosphoribosyltransferase (214 aa).

Lys26 is a 5-phospho-alpha-D-ribose 1-diphosphate binding site. 34-35 (FF) provides a ligand contact to orotate. 5-phospho-alpha-D-ribose 1-diphosphate-binding positions include 72–73 (YK), Arg99, Lys100, Lys103, His105, and 124–132 (DDVITAGTA). Residues Thr128 and Arg156 each contribute to the orotate site.

This sequence belongs to the purine/pyrimidine phosphoribosyltransferase family. PyrE subfamily. As to quaternary structure, homodimer. Mg(2+) serves as cofactor.

The enzyme catalyses orotidine 5'-phosphate + diphosphate = orotate + 5-phospho-alpha-D-ribose 1-diphosphate. The protein operates within pyrimidine metabolism; UMP biosynthesis via de novo pathway; UMP from orotate: step 1/2. Its function is as follows. Catalyzes the transfer of a ribosyl phosphate group from 5-phosphoribose 1-diphosphate to orotate, leading to the formation of orotidine monophosphate (OMP). The sequence is that of Orotate phosphoribosyltransferase from Proteus mirabilis (strain HI4320).